We begin with the raw amino-acid sequence, 1061 residues long: Ribonuclease 3 (1061 aa).

Disordered stretches follow at residues 1–20 (MDFT…QIHQ) and 149–244 (PLHS…SYNE). A compositionally biased stretch (basic and acidic residues) spans 156 to 173 (KTPERKENEEDSDSEIRS). RNase III domains lie at 586 to 759 (LSVF…LDSG) and 811 to 935 (FHRL…VDKG). Glu-851, Asp-921, and Glu-924 together coordinate Mg(2+). One can recognise a DRBM domain in the interval 962–1037 (DAKSHLQQWC…AENALAALEK (76 aa)).

Belongs to the ribonuclease III family. The cofactor is Mg(2+). It depends on Mn(2+) as a cofactor.

It localises to the nucleus. The enzyme catalyses Endonucleolytic cleavage to 5'-phosphomonoester.. Functionally, executes the initial step of microRNA (miRNA) processing in the nucleus, that is the cleavage of pri-miRNA to release pre-miRNA. Involved in pre-rRNA processing. Cleaves double-strand RNA and does not cleave single-strand RNA. Involved in fertility. Required for the function or synthesis of the let-7 miRNA. This is Ribonuclease 3 from Caenorhabditis briggsae.